A 266-amino-acid polypeptide reads, in one-letter code: Putative carbamate hydrolase RutD (266 aa).

The region spanning 14-238 (PVVVLSAGLG…RVEMPWGGHA (225 aa)) is the AB hydrolase-1 domain.

Belongs to the AB hydrolase superfamily. Hydrolase RutD family.

It carries out the reaction carbamate + 2 H(+) = NH4(+) + CO2. Involved in pyrimidine catabolism. May facilitate the hydrolysis of carbamate, a reaction that can also occur spontaneously. The polypeptide is Putative carbamate hydrolase RutD (Klebsiella pneumoniae (strain 342)).